The following is a 184-amino-acid chain: uncharacterized protein (184 aa).

The interval 130–149 is disordered; that stretch reads DKDDDKKKKKKDDKKDDPCN.

The protein localises to the virion. This is an uncharacterized protein from Acanthamoeba polyphaga (Amoeba).